Consider the following 142-residue polypeptide: Protein NIM1-INTERACTING 1 (142 aa).

The involved in NPR1/NIM1 interaction stretch occupies residues Asp-47–Ile-53. A Nuclear localization signal motif is present at residues Arg-60–Arg-64. 2 disordered regions span residues Arg-63 to Ile-86 and Met-108 to Leu-142. Positions Val-110–Ala-141 form a coiled coil. Basic and acidic residues predominate over residues Ser-111–Glu-121.

The protein belongs to the NPR1-interactor family. Interacts with NPR1 C-terminal region.

The protein resides in the nucleus. The sequence is that of Protein NIM1-INTERACTING 1 from Arabidopsis thaliana (Mouse-ear cress).